A 518-amino-acid polypeptide reads, in one-letter code: Protein nucleotidyltransferase YdiU (518 aa).

Residues 1 to 10 show a composition bias toward basic and acidic residues; it reads MTHLQFDNRL. The segment at 1 to 23 is disordered; the sequence is MTHLQFDNRLRAQLPGDPEQGPR. Positions 100, 102, 103, 123, 135, 136, 193, and 200 each coordinate ATP. D270 acts as the Proton acceptor in catalysis. N271 and D280 together coordinate Mg(2+). Position 280 (D280) interacts with ATP.

The protein belongs to the SELO family. It depends on Mg(2+) as a cofactor. Mn(2+) is required as a cofactor.

It catalyses the reaction L-seryl-[protein] + ATP = 3-O-(5'-adenylyl)-L-seryl-[protein] + diphosphate. The enzyme catalyses L-threonyl-[protein] + ATP = 3-O-(5'-adenylyl)-L-threonyl-[protein] + diphosphate. The catalysed reaction is L-tyrosyl-[protein] + ATP = O-(5'-adenylyl)-L-tyrosyl-[protein] + diphosphate. It carries out the reaction L-histidyl-[protein] + UTP = N(tele)-(5'-uridylyl)-L-histidyl-[protein] + diphosphate. It catalyses the reaction L-seryl-[protein] + UTP = O-(5'-uridylyl)-L-seryl-[protein] + diphosphate. The enzyme catalyses L-tyrosyl-[protein] + UTP = O-(5'-uridylyl)-L-tyrosyl-[protein] + diphosphate. In terms of biological role, nucleotidyltransferase involved in the post-translational modification of proteins. It can catalyze the addition of adenosine monophosphate (AMP) or uridine monophosphate (UMP) to a protein, resulting in modifications known as AMPylation and UMPylation. This is Protein nucleotidyltransferase YdiU from Xanthomonas campestris pv. campestris (strain B100).